The sequence spans 118 residues: Large ribosomal subunit protein uL18 (118 aa).

The protein belongs to the universal ribosomal protein uL18 family. Part of the 50S ribosomal subunit; part of the 5S rRNA/L5/L18/L25 subcomplex. Contacts the 5S and 23S rRNAs.

This is one of the proteins that bind and probably mediate the attachment of the 5S RNA into the large ribosomal subunit, where it forms part of the central protuberance. In Rhizorhabdus wittichii (strain DSM 6014 / CCUG 31198 / JCM 15750 / NBRC 105917 / EY 4224 / RW1) (Sphingomonas wittichii), this protein is Large ribosomal subunit protein uL18.